Here is a 380-residue protein sequence, read N- to C-terminus: MAPTIRKSHPLLKIINGSFIDLPSPANISAWWNFGSLLGVCLIAQIATGLFLAMHHTADTSLAFSSIAHICRDVNNGWLLRNLHANGASFFFICIYFHIGRGLYYGSYLYKETWNIGVILLFLVMATAFVGYVLPWGQMSFWGATVITNLLSAAPYIGPDLVQWIWGGFSVDNATLTRFFTFHFILPFIIAAASMINLLFLHQTGSSNPTGLNSNLDKVSFHPYFSYKDLLGFVIMLGALASLSTFAPNLLGDPDNFTPANPLVTPPHIKPEWYFLFAYAILRSIPNKLGGVLALLLSIMILFLMPIIHTSKLRSLMFRPIAKTFFWALIANTAILTWIGGQPVEDPFITIGQIASGLYFLIFVLLIPSLGLLENKLLKI.

Transmembrane regions (helical) follow at residues 34 to 54, 78 to 99, 114 to 134, and 179 to 199; these read FGSL…FLAM, WLLR…YFHI, WNIG…GYVL, and FFTF…INLL. Heme b contacts are provided by His-84 and His-98. A heme b-binding site is contributed by His-183. Residue His-202 coordinates a ubiquinone. The next 4 helical transmembrane spans lie at 227-247, 289-309, 321-341, and 348-368; these read YKDL…STFA, LGGV…PIIH, IAKT…WIGG, and FITI…LLIP.

Belongs to the cytochrome b family. As to quaternary structure, the cytochrome bc1 complex contains 3 respiratory subunits (MT-CYB, CYC1 and UQCRFS1), 2 core proteins (UQCRC1 and UQCRC2) and probably 6 low-molecular weight proteins. Heme b serves as cofactor.

Its subcellular location is the mitochondrion inner membrane. In terms of biological role, component of the ubiquinol-cytochrome c reductase complex (complex III or cytochrome b-c1 complex) that is part of the mitochondrial respiratory chain. The b-c1 complex mediates electron transfer from ubiquinol to cytochrome c. Contributes to the generation of a proton gradient across the mitochondrial membrane that is then used for ATP synthesis. In Pelophylax plancyi (Korean pond frog), this protein is Cytochrome b (mt-cyb).